The primary structure comprises 166 residues: Endoribonuclease YbeY (166 aa).

Zn(2+)-binding residues include His132, His136, and His142.

It belongs to the endoribonuclease YbeY family. It depends on Zn(2+) as a cofactor.

It localises to the cytoplasm. Its function is as follows. Single strand-specific metallo-endoribonuclease involved in late-stage 70S ribosome quality control and in maturation of the 3' terminus of the 16S rRNA. In Clostridium botulinum (strain 657 / Type Ba4), this protein is Endoribonuclease YbeY.